The chain runs to 122 residues: Large ribosomal subunit protein uL14 (122 aa).

It belongs to the universal ribosomal protein uL14 family. As to quaternary structure, part of the 50S ribosomal subunit. Forms a cluster with proteins L3 and L19. In the 70S ribosome, L14 and L19 interact and together make contacts with the 16S rRNA in bridges B5 and B8.

Binds to 23S rRNA. Forms part of two intersubunit bridges in the 70S ribosome. This chain is Large ribosomal subunit protein uL14, found in Acinetobacter baylyi (strain ATCC 33305 / BD413 / ADP1).